The following is a 573-amino-acid chain: 2-succinyl-5-enolpyruvyl-6-hydroxy-3-cyclohexene-1-carboxylate synthase (573 aa).

Belongs to the TPP enzyme family. MenD subfamily. As to quaternary structure, homodimer. It depends on Mg(2+) as a cofactor. The cofactor is Mn(2+). Thiamine diphosphate is required as a cofactor.

The enzyme catalyses isochorismate + 2-oxoglutarate + H(+) = 5-enolpyruvoyl-6-hydroxy-2-succinyl-cyclohex-3-ene-1-carboxylate + CO2. It functions in the pathway quinol/quinone metabolism; 1,4-dihydroxy-2-naphthoate biosynthesis; 1,4-dihydroxy-2-naphthoate from chorismate: step 2/7. The protein operates within quinol/quinone metabolism; menaquinone biosynthesis. Functionally, catalyzes the thiamine diphosphate-dependent decarboxylation of 2-oxoglutarate and the subsequent addition of the resulting succinic semialdehyde-thiamine pyrophosphate anion to isochorismate to yield 2-succinyl-5-enolpyruvyl-6-hydroxy-3-cyclohexene-1-carboxylate (SEPHCHC). This chain is 2-succinyl-5-enolpyruvyl-6-hydroxy-3-cyclohexene-1-carboxylate synthase, found in Shewanella baltica (strain OS195).